Here is a 125-residue protein sequence, read N- to C-terminus: Subtelomeric hrmA-associated cluster protein cgnA (125 aa).

G-Q-I/R/S repeat units follow at residues 11–13 (GQI), 14–16 (GPI), 17–19 (GQR), 20–22 (GQS), 23–25 (GQR), 26–28 (GQS), 29–31 (GQR), 32–34 (GQS), 35–37 (GQI), 38–40 (GQS), 41–43 (GQS), 44–46 (GQS), 47–49 (GQS), 50–52 (GQS), 53–55 (GQI), 56–58 (GQI), 59–61 (GQI), 62–64 (GQI), 65–67 (GQI), 68–70 (GQI), 71–73 (GQI), 74–76 (GQI), and 77–79 (GQA). The segment at 11–79 (GQIGPIGQRG…IGQIGQIGQA (69 aa)) is 23 X 3 AA approximate tandem repeats of G-Q-I/R/S. The tract at residues 15–57 (PIGQRGQSGQRGQSGQRGQSGQIGQSGQSGQSGQSGQSGQIGQ) is disordered.

It localises to the secreted. Functionally, hypoxia responsive morphology factor that modulates the expression of the subtelomeric hrmA-associated cluster (HAC) containing genes that alter the hyphal surface (such as reduced total chitin or increased beta-glucan exposure) and perturb inter-hyphal interactions within the developing biofilms, resulting in a loss of vertically aligned polarized growing filaments. Consequently, this hypoxia-typic morphotype (called H-MORPH) with altered biofilm architecture leads to increased hypoxia fitness, increased host inflammation, rapid disease progression, and mortality in a murine model of invasive aspergillosis. GcnA is directly involved in the reduction total surface chitin and the increase beta-glucan exposure, and mediates the detachment of the extracellular matrix and especially of its component galactosaminogalactan (GAG). The protein is Subtelomeric hrmA-associated cluster protein cgnA of Aspergillus fumigatus (strain CBS 144.89 / FGSC A1163 / CEA10) (Neosartorya fumigata).